The sequence spans 455 residues: MLPSQSPAIFTVSRLNQTVRLLLEHEMGQVWISGEISNFTQPASGHWYFTLKDDTAQVRCAMFRNSNRRVTFRPQHGQQVLVRANITLYEPRGDYQIIVESMQPAGEGLLQQKYEQLKAKLQAEGLFDQQYKKPLPSPAHCVGVITSKTGAALHDILHVLKRRDPSLPVIIYPTAVQGDDAPGQIVRAIELANQRNECDVLIVGRGGGSLEDLWSFNDERVARAIFASRIPVVSAVGHETDVTIADFVADLRAPTPSAAAEVVSRNQQELLRQVQSARQRLEMAMDYYLANRTRRFTQIHHRLQQQHPQLRLARQQTMLERLQKRMSFALENQLKRAGQQQQRLTQRLNQQNPQPKIHRAQTRIQQLEYRLAETLRAQLSATRERFGNAVTHLEAVSPLSTLARGYSVTSAADGAVLKQVKQVKVGETLTTRLGDGVVISEVSAVTKSRKPRKKA.

This sequence belongs to the XseA family. Heterooligomer composed of large and small subunits.

The protein localises to the cytoplasm. The enzyme catalyses Exonucleolytic cleavage in either 5'- to 3'- or 3'- to 5'-direction to yield nucleoside 5'-phosphates.. Bidirectionally degrades single-stranded DNA into large acid-insoluble oligonucleotides, which are then degraded further into small acid-soluble oligonucleotides. This chain is Exodeoxyribonuclease 7 large subunit, found in Escherichia coli O7:K1 (strain IAI39 / ExPEC).